We begin with the raw amino-acid sequence, 457 residues long: tRNA modification GTPase MnmE (457 aa).

(6S)-5-formyl-5,6,7,8-tetrahydrofolate is bound by residues Arg23, Glu85, and Arg124. A TrmE-type G domain is found at 220 to 376 (GALVVLAGQV…LVTAIRAAVL (157 aa)). A K(+)-binding site is contributed by Asn230. GTP-binding positions include 230–235 (NAGKSS), 249–255 (TDLPGTT), and 274–277 (DTAG). Ser234 provides a ligand contact to Mg(2+). K(+)-binding residues include Thr249, Leu251, and Thr254. Thr255 contacts Mg(2+). Lys457 contributes to the (6S)-5-formyl-5,6,7,8-tetrahydrofolate binding site.

This sequence belongs to the TRAFAC class TrmE-Era-EngA-EngB-Septin-like GTPase superfamily. TrmE GTPase family. As to quaternary structure, homodimer. Heterotetramer of two MnmE and two MnmG subunits. The cofactor is K(+).

It localises to the cytoplasm. Its function is as follows. Exhibits a very high intrinsic GTPase hydrolysis rate. Involved in the addition of a carboxymethylaminomethyl (cmnm) group at the wobble position (U34) of certain tRNAs, forming tRNA-cmnm(5)s(2)U34. The sequence is that of tRNA modification GTPase MnmE from Nitratidesulfovibrio vulgaris (strain DP4) (Desulfovibrio vulgaris).